A 586-amino-acid polypeptide reads, in one-letter code: uncharacterized protein (586 aa).

The interval 1 to 115 is disordered; sequence MRVLVAETGR…NTEKLAGRDD (115 aa). A compositionally biased stretch (basic and acidic residues) spans 8 to 20; the sequence is TGREDNVSVHSRE. Residues 21-31 are compositionally biased toward polar residues; sequence VSVNGSDSGTG. Residues 35-44 show a composition bias toward basic and acidic residues; sequence YKLETDDEHP. Residues 76–107 show a composition bias toward polar residues; the sequence is TGMNTEYNDDNSSLVNTPRDSTTYAETNSPNT. WD repeat units lie at residues 184–223, 253–291, 293–333, 335–374, 387–430, and 432–474; these read QFKE…ERRE, GHNA…SLAV, RHNE…ILHW, ELEY…YVSS, CRVT…LVLK, and SDAH…LINA.

The protein resides in the cytoplasm. It is found in the nucleus. This is an uncharacterized protein from Schizosaccharomyces pombe (strain 972 / ATCC 24843) (Fission yeast).